The sequence spans 261 residues: Syntaxin-7 (261 aa).

Residue S2 is modified to N-acetylserine. Residues 2–238 (SYTPGIGGDS…DYQRKSRKTL (237 aa)) lie on the Cytoplasmic side of the membrane. T4 carries the phosphothreonine modification. Residue S45 is modified to Phosphoserine. The stretch at 47 to 68 (ELRQLLQQKQQYTNQLAKETDK) forms a coiled coil. At S75 the chain carries Phosphoserine. Phosphothreonine is present on T79. S125, S126, S129, and S205 each carry phosphoserine. The disordered stretch occupies residues 128-148 (VSGGFPEDSSKEKNLVSWESQ). In terms of domain architecture, t-SNARE coiled-coil homology spans 165-227 (LRLIHERESS…QQANQQLSRA (63 aa)). The helical; Anchor for type IV membrane protein transmembrane segment at 239-259 (CIIIFILVVRIVIICLIVWGL) threads the bilayer. Over 260 to 261 (KG) the chain is Vesicular.

Belongs to the syntaxin family. As to quaternary structure, interacts with VPS11, VPS16 and VPS18. Interacts with VPS33A. Forms a SNARE complex with VTI1B, STX8 and VAMP8 which functions in the homotypic fusion of late endosomes. Component of the SNARE complex composed of STX7, STX8, VAMP7 and VTI1B that is required for heterotypic fusion of late endosomes with lysosomes. Interacts with TPC1.

It localises to the early endosome membrane. Functionally, may be involved in protein trafficking from the plasma membrane to the early endosome (EE) as well as in homotypic fusion of endocytic organelles. Mediates the endocytic trafficking from early endosomes to late endosomes and lysosomes. This chain is Syntaxin-7 (Stx7), found in Mus musculus (Mouse).